The following is a 285-amino-acid chain: V-set and transmembrane domain-containing protein 2B (285 aa).

The signal sequence occupies residues 1-28 (MEQRNRLGALGYLLPLLLHSLLLFVADA). Residues 29 to 143 (TFTEVPKDVT…DDDTQEHKAQ (115 aa)) enclose the Ig-like V-type domain. Residues 29–263 (TFTEVPKDVT…HGSGTGPGYS (235 aa)) are Extracellular-facing. Cysteine 49 and cysteine 127 form a disulfide bridge. The disordered stretch occupies residues 160–225 (AEAVSHIQSS…AAAAAASATH (66 aa)). 2 stretches are compositionally biased toward low complexity: residues 176-189 (ASSAVSSNNAGAAV) and 208-225 (PAGSGVPEAAAAAASATH). Residues 264 to 284 (ADPLLSLLLLALHKFLHPLLG) traverse the membrane as a helical segment. Histidine 285 is a topological domain (cytoplasmic).

It localises to the membrane. This chain is V-set and transmembrane domain-containing protein 2B (Vstm2b), found in Mus musculus (Mouse).